The following is an 85-amino-acid chain: Small ribosomal subunit protein bS20 (85 aa).

Residues 1 to 22 (MANIKSAIKRAKLSEERRAHNA) are disordered.

The protein belongs to the bacterial ribosomal protein bS20 family.

Functionally, binds directly to 16S ribosomal RNA. This Bacillus cytotoxicus (strain DSM 22905 / CIP 110041 / 391-98 / NVH 391-98) protein is Small ribosomal subunit protein bS20.